Reading from the N-terminus, the 329-residue chain is DNA-directed RNA polymerase subunit alpha (329 aa).

An alpha N-terminal domain (alpha-NTD) region spans residues 1–234 (MQGSVTEFLK…EQLDAFVELR (234 aa)). The alpha C-terminal domain (alpha-CTD) stretch occupies residues 248–329 (FDPILLRPVD…WPPASLVDDL (82 aa)).

Belongs to the RNA polymerase alpha chain family. Homodimer. The RNAP catalytic core consists of 2 alpha, 1 beta, 1 beta' and 1 omega subunit. When a sigma factor is associated with the core the holoenzyme is formed, which can initiate transcription.

It catalyses the reaction RNA(n) + a ribonucleoside 5'-triphosphate = RNA(n+1) + diphosphate. In terms of biological role, DNA-dependent RNA polymerase catalyzes the transcription of DNA into RNA using the four ribonucleoside triphosphates as substrates. The protein is DNA-directed RNA polymerase subunit alpha of Shewanella denitrificans (strain OS217 / ATCC BAA-1090 / DSM 15013).